The following is a 185-amino-acid chain: MKFTIAFAGLLGVFLTPALADYSISVNDDGNSGGSGQQSVSVNNEHNVANVDNNNGWNSWNALWDYRTGFAVTRLFEKKSCIVHKMKKEAMPSLQALDALVKEKKLQGKGPGGPPPKSLRYSVNPNRVDNLDKFGKSIVAMCKGIPTYMAEEIQGANLISYSEKCISANILWILNISFCGGIAEN.

Residues M1–A20 form the signal peptide. Residues N54 to A150 form the BRICHOS domain. C81 and C142 are oxidised to a cystine.

It belongs to the gastrokine family. Highly expressed specifically in surface cells of the antrum mucosa from where it is secreted.

It is found in the secreted. Its subcellular location is the cytoplasmic granule. It localises to the golgi apparatus. Functionally, has mitogenic activity and may be involved in maintaining the integrity of the gastric mucosal epithelium. This chain is Gastrokine-1 (GKN1), found in Sus scrofa (Pig).